Consider the following 239-residue polypeptide: Pyridoxine 5'-phosphate synthase (239 aa).

Asn7 contributes to the 3-amino-2-oxopropyl phosphate binding site. Asp9–His10 provides a ligand contact to 1-deoxy-D-xylulose 5-phosphate. Arg18 is a binding site for 3-amino-2-oxopropyl phosphate. His43 acts as the Proton acceptor in catalysis. 1-deoxy-D-xylulose 5-phosphate contacts are provided by Arg45 and His50. Catalysis depends on Glu70, which acts as the Proton acceptor. Thr100 is a 1-deoxy-D-xylulose 5-phosphate binding site. Catalysis depends on His191, which acts as the Proton donor. 3-amino-2-oxopropyl phosphate-binding positions include Gly192 and Gly213–His214.

It belongs to the PNP synthase family. In terms of assembly, homooctamer; tetramer of dimers.

The protein resides in the cytoplasm. It catalyses the reaction 3-amino-2-oxopropyl phosphate + 1-deoxy-D-xylulose 5-phosphate = pyridoxine 5'-phosphate + phosphate + 2 H2O + H(+). The protein operates within cofactor biosynthesis; pyridoxine 5'-phosphate biosynthesis; pyridoxine 5'-phosphate from D-erythrose 4-phosphate: step 5/5. Its function is as follows. Catalyzes the complicated ring closure reaction between the two acyclic compounds 1-deoxy-D-xylulose-5-phosphate (DXP) and 3-amino-2-oxopropyl phosphate (1-amino-acetone-3-phosphate or AAP) to form pyridoxine 5'-phosphate (PNP) and inorganic phosphate. The polypeptide is Pyridoxine 5'-phosphate synthase (Pelobacter propionicus (strain DSM 2379 / NBRC 103807 / OttBd1)).